Consider the following 459-residue polypeptide: MQIQFHLYNTLSRTKEVFNPQDQANVKMYVCGPTVYDNPHIGNGRSGVVYDLLYRIVIKIFGEKTVKYVRNITNVDDKIIDRAELLGVTIDELTDKVTKEFHKNMAYLGCMLPSIEPKATKHTDVMIAIIERLIAKEHAYVVDNHVYFDVLSAPNYTELSNRSLEEMFEGVHVENSKTKKNPQDFVLWKPAKQNESANMNFESPWGLGRPGWHIECSAMSYKYLGENFDIHGGGADLIFPHHTNEIAQSRCAFPSSTYAKYWVHNGFLTVNGEKMSKSLGNFITIRDLMDKQIQGEVVRLFLLSSHYRRPLDYNDKAIEDAKKTLDYWYRAIENINVQKIDLPHDFMQSLLDDMNTPLAVKIINDYAKGVFISKTEEERQLNASAIITCANFIGLMNKTPHEWFNSGVDELYINEFVNKRLEAKKQKNWLLADQIRNQLLEEKIILEDQPDGTTIWRKE.

Cysteine 31 lines the Zn(2+) pocket. The short motif at proline 33–asparagine 43 is the 'HIGH' region element. Cysteine 216, histidine 241, and glutamate 245 together coordinate Zn(2+). The short motif at lysine 274–serine 278 is the 'KMSKS' region element. Lysine 277 serves as a coordination point for ATP.

It belongs to the class-I aminoacyl-tRNA synthetase family. Monomer. Zn(2+) is required as a cofactor.

The protein resides in the cytoplasm. The catalysed reaction is tRNA(Cys) + L-cysteine + ATP = L-cysteinyl-tRNA(Cys) + AMP + diphosphate. This chain is Cysteine--tRNA ligase, found in Rickettsia massiliae (strain Mtu5).